A 487-amino-acid polypeptide reads, in one-letter code: Reticulon-like protein B21 (487 aa).

The segment covering 1–22 (MTPRRSLSSSDSNDKSPSVSVV) has biased composition (low complexity). Disordered regions lie at residues 1 to 43 (MTPR…PGRV), 65 to 86 (LRKV…TEQE), and 113 to 149 (KSNE…EKKS). Residues 26–38 (ARSESVEGIEKKT) are compositionally biased toward basic and acidic residues. Over residues 118-143 (EQIDNGDQEIGDQDDYEEDGDEEEER) the composition is skewed to acidic residues. The Reticulon domain maps to 230–419 (LVDLVMWRDV…FTLVWNLSSV (190 aa)). The next 4 membrane-spanning stretches (helical) occupy residues 242–262 (STLV…ANDL), 264–284 (FSFI…MFVL), 354–374 (ITLW…PKIF), and 413–433 (VWNL…LVAF). The segment covering 446-463 (QADDDEDDNEEEEAEEEK) has biased composition (acidic residues). Positions 446–487 (QADDDEDDNEEEEAEEEKEQVPPKHKRAPPHMMMPNKLKKIS) are disordered.

It localises to the endoplasmic reticulum membrane. This Arabidopsis thaliana (Mouse-ear cress) protein is Reticulon-like protein B21 (RTNLB21).